The following is a 216-amino-acid chain: MEPAFWQQRWADNQIGFHQAQVNPYLQTYWPQLQLAPGSRVLVPLCGKSLDLAWLAGQGHRVLGVELSRRAVEDFFREHGLEAEVRQQGAFEVWRSGDVQLWCGDFFALRAEDVADCVGLYDRAAVIALPVQMRARYMQLLSGLLPANCRGLVVTLEYDQSLLAGPPFSVRDEELRQGFAGWQVEQLEAVDVIEDSPKFVQAGASSLLERVYQVSR.

S-adenosyl-L-methionine-binding residues include Trp-10, Leu-45, Glu-66, and Arg-123.

This sequence belongs to the class I-like SAM-binding methyltransferase superfamily. TPMT family.

It is found in the cytoplasm. The catalysed reaction is S-adenosyl-L-methionine + a thiopurine = S-adenosyl-L-homocysteine + a thiopurine S-methylether.. The chain is Thiopurine S-methyltransferase from Pseudomonas putida (strain ATCC 47054 / DSM 6125 / CFBP 8728 / NCIMB 11950 / KT2440).